The following is a 490-amino-acid chain: Aspartyl/glutamyl-tRNA(Asn/Gln) amidotransferase subunit B (490 aa).

It belongs to the GatB/GatE family. GatB subfamily. Heterotrimer of A, B and C subunits.

The catalysed reaction is L-glutamyl-tRNA(Gln) + L-glutamine + ATP + H2O = L-glutaminyl-tRNA(Gln) + L-glutamate + ADP + phosphate + H(+). It carries out the reaction L-aspartyl-tRNA(Asn) + L-glutamine + ATP + H2O = L-asparaginyl-tRNA(Asn) + L-glutamate + ADP + phosphate + 2 H(+). Its function is as follows. Allows the formation of correctly charged Asn-tRNA(Asn) or Gln-tRNA(Gln) through the transamidation of misacylated Asp-tRNA(Asn) or Glu-tRNA(Gln) in organisms which lack either or both of asparaginyl-tRNA or glutaminyl-tRNA synthetases. The reaction takes place in the presence of glutamine and ATP through an activated phospho-Asp-tRNA(Asn) or phospho-Glu-tRNA(Gln). The chain is Aspartyl/glutamyl-tRNA(Asn/Gln) amidotransferase subunit B from Synechococcus sp. (strain JA-2-3B'a(2-13)) (Cyanobacteria bacterium Yellowstone B-Prime).